Here is a 125-residue protein sequence, read N- to C-terminus: Glycine cleavage system H protein (125 aa).

Residues 19 to 101 (VAVVGISDYA…EGKGWFMKLK (83 aa)) form the Lipoyl-binding domain. N6-lipoyllysine is present on lysine 60.

It belongs to the GcvH family. In terms of assembly, the glycine cleavage system is composed of four proteins: P, T, L and H. (R)-lipoate is required as a cofactor.

In terms of biological role, the glycine cleavage system catalyzes the degradation of glycine. The H protein shuttles the methylamine group of glycine from the P protein to the T protein. The sequence is that of Glycine cleavage system H protein from Xanthobacter autotrophicus (strain ATCC BAA-1158 / Py2).